A 185-amino-acid chain; its full sequence is Peptidyl-tRNA hydrolase (185 aa).

Tyr14 lines the tRNA pocket. His19 serves as the catalytic Proton acceptor. TRNA is bound by residues Tyr64, Asn66, and Asn112.

Belongs to the PTH family. Monomer.

It is found in the cytoplasm. It catalyses the reaction an N-acyl-L-alpha-aminoacyl-tRNA + H2O = an N-acyl-L-amino acid + a tRNA + H(+). Functionally, hydrolyzes ribosome-free peptidyl-tRNAs (with 1 or more amino acids incorporated), which drop off the ribosome during protein synthesis, or as a result of ribosome stalling. In terms of biological role, catalyzes the release of premature peptidyl moieties from peptidyl-tRNA molecules trapped in stalled 50S ribosomal subunits, and thus maintains levels of free tRNAs and 50S ribosomes. The sequence is that of Peptidyl-tRNA hydrolase from Lactiplantibacillus plantarum (strain ATCC BAA-793 / NCIMB 8826 / WCFS1) (Lactobacillus plantarum).